Here is a 40-residue protein sequence, read N- to C-terminus: RNA replication protein (40 aa).

This sequence belongs to the potexviruses/carlaviruses RNA replication protein family.

The enzyme catalyses RNA(n) + a ribonucleoside 5'-triphosphate = RNA(n+1) + diphosphate. It carries out the reaction ATP + H2O = ADP + phosphate + H(+). Its function is as follows. RNA replication. The central part of this protein possibly functions as an ATP-binding helicase. The protein is RNA replication protein of Lily symptomless virus (LSV).